The primary structure comprises 592 residues: Inactive metallocarboxypeptidase ECM14 (592 aa).

A signal peptide spans 1-21; the sequence is MRQFTHGTLLAILALANTISA. Residues 22–174 constitute a propeptide that is removed on maturation; it reads IPSFSANNYP…QTVYESYPSS (153 aa). Residues 170 to 179 show a composition bias toward polar residues; it reads SYPSSSQRPT. Residues 170–191 form a disordered region; that stretch reads SYPSSSQRPTDNGRGFLPSRES. Positions 202 to 521 constitute a Peptidase M14 domain; sequence DYQPLSVIGP…NAVMVLAKFL (320 aa). Residues histidine 264 and glutamate 267 each contribute to the Zn(2+) site. Residues 264–267, arginine 322, and 339–340 contribute to the substrate site; these read HARE and DR. Cysteine 333 and cysteine 356 form a disulfide bridge. Asparagine 349 carries an N-linked (GlcNAc...) asparagine glycan. Histidine 396 contributes to the Zn(2+) binding site. 397–398 is a binding site for substrate; sequence SY. Residues 542–592 form a disordered region; the sequence is ADKPILDDGDDDEEEDGQDKKDDSWIPDEYKNDNDHDDDDDGWGLRRRRKR. Residues 548-558 are compositionally biased toward acidic residues; sequence DDGDDDEEEDG. Basic and acidic residues predominate over residues 559–575; that stretch reads QDKKDDSWIPDEYKNDN.

This sequence belongs to the peptidase M14 family. Zn(2+) is required as a cofactor.

The protein resides in the vacuole. It is found in the secreted. Inactive carboxypeptidase that may play a role in cell wall organization and biogenesis. The sequence is that of Inactive metallocarboxypeptidase ECM14 (ECM14) from Ajellomyces dermatitidis (strain ER-3 / ATCC MYA-2586) (Blastomyces dermatitidis).